Here is a 170-residue protein sequence, read N- to C-terminus: NADH-ubiquinone oxidoreductase chain 2 (170 aa).

Helical transmembrane passes span 24–44 (LLWM…IMMF), 67–87 (FLIF…GFLP), 101–121 (LFIL…YLRL), and 150–170 (LILN…YMIL).

This sequence belongs to the complex I subunit 2 family.

The protein resides in the mitochondrion inner membrane. It catalyses the reaction a ubiquinone + NADH + 5 H(+)(in) = a ubiquinol + NAD(+) + 4 H(+)(out). In terms of biological role, core subunit of the mitochondrial membrane respiratory chain NADH dehydrogenase (Complex I) that is believed to belong to the minimal assembly required for catalysis. Complex I functions in the transfer of electrons from NADH to the respiratory chain. The immediate electron acceptor for the enzyme is believed to be ubiquinone. The polypeptide is NADH-ubiquinone oxidoreductase chain 2 (ND2) (Anopheles albimanus (New world malaria mosquito)).